Reading from the N-terminus, the 510-residue chain is Histidine ammonia-lyase (510 aa).

The 5-imidazolinone (Ala-Gly) cross-link spans alanine 145–glycine 147. 2,3-didehydroalanine (Ser) is present on serine 146.

It belongs to the PAL/histidase family. Contains an active site 4-methylidene-imidazol-5-one (MIO), which is formed autocatalytically by cyclization and dehydration of residues Ala-Ser-Gly.

It localises to the cytoplasm. It carries out the reaction L-histidine = trans-urocanate + NH4(+). It participates in amino-acid degradation; L-histidine degradation into L-glutamate; N-formimidoyl-L-glutamate from L-histidine: step 1/3. The polypeptide is Histidine ammonia-lyase (Stigmatella aurantiaca).